The chain runs to 203 residues: ATP-dependent Clp protease proteolytic subunit (203 aa).

Residue S103 is the Nucleophile of the active site. The active site involves H128.

The protein belongs to the peptidase S14 family. Fourteen ClpP subunits assemble into 2 heptameric rings which stack back to back to give a disk-like structure with a central cavity, resembling the structure of eukaryotic proteasomes.

It is found in the cytoplasm. The enzyme catalyses Hydrolysis of proteins to small peptides in the presence of ATP and magnesium. alpha-casein is the usual test substrate. In the absence of ATP, only oligopeptides shorter than five residues are hydrolyzed (such as succinyl-Leu-Tyr-|-NHMec, and Leu-Tyr-Leu-|-Tyr-Trp, in which cleavage of the -Tyr-|-Leu- and -Tyr-|-Trp bonds also occurs).. Its function is as follows. Cleaves peptides in various proteins in a process that requires ATP hydrolysis. Has a chymotrypsin-like activity. Plays a major role in the degradation of misfolded proteins. The chain is ATP-dependent Clp protease proteolytic subunit from Nitrosococcus oceani (strain ATCC 19707 / BCRC 17464 / JCM 30415 / NCIMB 11848 / C-107).